A 405-amino-acid chain; its full sequence is GTPase Obg (405 aa).

The 159-residue stretch at 1–159 folds into the Obg domain; it reads MKFVDEVSIF…RDLKLELKVL (159 aa). Positions 127-148 are disordered; the sequence is NTRFKSSTNRAPRQTTPGKPGE. Residues 129-143 show a composition bias toward polar residues; that stretch reads RFKSSTNRAPRQTTP. The 174-residue stretch at 160 to 333 folds into the OBG-type G domain; it reads ADVGLLGLPN…LCQDIMHYLD (174 aa). Residues 166 to 173, 191 to 195, 213 to 216, 283 to 286, and 314 to 316 each bind GTP; these read GLPNAGKS, FTTLV, DIPG, NKAD, and SAL. Positions 173 and 193 each coordinate Mg(2+). Over residues 383 to 398 the composition is skewed to acidic residues; sequence ALEDEDDFDDEDDGDG. The segment at 383–405 is disordered; it reads ALEDEDDFDDEDDGDGPEIFYVR.

The protein belongs to the TRAFAC class OBG-HflX-like GTPase superfamily. OBG GTPase family. As to quaternary structure, monomer. Mg(2+) is required as a cofactor.

The protein resides in the cytoplasm. Functionally, an essential GTPase which binds GTP, GDP and possibly (p)ppGpp with moderate affinity, with high nucleotide exchange rates and a fairly low GTP hydrolysis rate. Plays a role in control of the cell cycle, stress response, ribosome biogenesis and in those bacteria that undergo differentiation, in morphogenesis control. The chain is GTPase Obg from Azotobacter vinelandii (strain DJ / ATCC BAA-1303).